Consider the following 130-residue polypeptide: Large ribosomal subunit protein bL17 (130 aa).

The protein belongs to the bacterial ribosomal protein bL17 family. As to quaternary structure, part of the 50S ribosomal subunit. Contacts protein L32.

This Buchnera aphidicola subsp. Acyrthosiphon pisum (strain APS) (Acyrthosiphon pisum symbiotic bacterium) protein is Large ribosomal subunit protein bL17.